The sequence spans 284 residues: Shikimate dehydrogenase (NADP(+)) (284 aa).

Shikimate is bound by residues 20–22 and Ser-67; that span reads SIS. Residue Lys-71 is the Proton acceptor of the active site. Asp-83 contributes to the NADP(+) binding site. Asn-92 and Asp-107 together coordinate shikimate. NADP(+)-binding positions include 129–133 and Ile-227; that span reads GAGGA. Tyr-229 provides a ligand contact to shikimate. Gly-250 provides a ligand contact to NADP(+).

Belongs to the shikimate dehydrogenase family. Homodimer.

The enzyme catalyses shikimate + NADP(+) = 3-dehydroshikimate + NADPH + H(+). The protein operates within metabolic intermediate biosynthesis; chorismate biosynthesis; chorismate from D-erythrose 4-phosphate and phosphoenolpyruvate: step 4/7. In terms of biological role, involved in the biosynthesis of the chorismate, which leads to the biosynthesis of aromatic amino acids. Catalyzes the reversible NADPH linked reduction of 3-dehydroshikimate (DHSA) to yield shikimate (SA). The protein is Shikimate dehydrogenase (NADP(+)) of Streptococcus pneumoniae (strain Taiwan19F-14).